A 47-amino-acid chain; its full sequence is uncharacterized protein (47 aa).

Residues 28–45 form a helical membrane-spanning segment; sequence VMIWGCLPYFLYVLIRMF.

The protein resides in the cell membrane. This is an uncharacterized protein from Bacillus subtilis (strain 168).